The chain runs to 55 residues: Large ribosomal subunit protein bL33 (55 aa).

Belongs to the bacterial ribosomal protein bL33 family.

The chain is Large ribosomal subunit protein bL33 from Deinococcus geothermalis (strain DSM 11300 / CIP 105573 / AG-3a).